The following is a 395-amino-acid chain: Protein HIGH CHLOROPHYLL FLUORESCENCE PHENOTYPE 244, chloroplastic (395 aa).

The N-terminal 64 residues, Met-1–Cys-64, are a transit peptide targeting the chloroplast.

The protein belongs to the NmrA-type oxidoreductase family. In terms of assembly, component of a high molecular weight complex containing OHP1, OHP2 and HCF244, and PSII core proteins D1/D2, HCF136 and HCF173. Interacts with OHP1. Forms a trimeric complex with OHP1 and OHP2 that mutually stabilizes each subunit.

The protein localises to the plastid. It is found in the chloroplast stroma. It localises to the chloroplast thylakoid membrane. In terms of biological role, auxiliary factor required, together with HCF173, for the biogenesis of photosystem II (PSII), especially for the synthesis of the reaction center proteins (e.g. D1), via the regulation of the corresponding mRNA (e.g. psbA) translation initiation (ribosomal loading) and stabilization. Forms a trimeric complex with OHP1 and OHP2 that is required to promote PSII core subunit assembly. The trimeric complex forms a transient PSII reaction center-like complex with PsbA, PsbD, PsbE, PsbF and PsbI subunits in thylakoids for early assembly of PSII as well as PSII repair. The trimeric complex is required for the recruitment of ribosomes to the psbA mRNA during PSII biogenesis and repair. The sequence is that of Protein HIGH CHLOROPHYLL FLUORESCENCE PHENOTYPE 244, chloroplastic from Arabidopsis thaliana (Mouse-ear cress).